The chain runs to 101 residues: Small ribosomal subunit protein uS14 (101 aa).

This sequence belongs to the universal ribosomal protein uS14 family. In terms of assembly, part of the 30S ribosomal subunit. Contacts proteins S3 and S10.

Binds 16S rRNA, required for the assembly of 30S particles and may also be responsible for determining the conformation of the 16S rRNA at the A site. The chain is Small ribosomal subunit protein uS14 from Ralstonia pickettii (strain 12J).